The sequence spans 233 residues: 7-cyano-7-deazaguanine synthase (233 aa).

7-17 serves as a coordination point for ATP; it reads CSGGLDSVSLA. Residues C185, C193, C196, and C199 each contribute to the Zn(2+) site.

Belongs to the QueC family. It depends on Zn(2+) as a cofactor.

It catalyses the reaction 7-carboxy-7-deazaguanine + NH4(+) + ATP = 7-cyano-7-deazaguanine + ADP + phosphate + H2O + H(+). Its pathway is purine metabolism; 7-cyano-7-deazaguanine biosynthesis. Catalyzes the ATP-dependent conversion of 7-carboxy-7-deazaguanine (CDG) to 7-cyano-7-deazaguanine (preQ(0)). The protein is 7-cyano-7-deazaguanine synthase of Ruegeria sp. (strain TM1040) (Silicibacter sp.).